We begin with the raw amino-acid sequence, 194 residues long: uncharacterized protein (194 aa).

Residues M1–A20 form the signal peptide. 4 N-linked (GlcNAc...) asparagine; by host glycosylation sites follow: N31, N72, N133, and N157.

This is an uncharacterized protein from Ostreid herpesvirus 1 (isolate France) (OsHV-1).